The following is a 194-amino-acid chain: CASP-like protein 1B1 (194 aa).

The Cytoplasmic portion of the chain corresponds to 1 to 24 (MASENGDKLELAFSAVPDPKPKKD). The helical transmembrane segment at 25–45 (WVILSLRVVAFFATASATLVM) threads the bilayer. Residues 46–77 (AFNKQTKGMVVATIGTNPVTITLTAMFQHTPA) are Extracellular-facing. A helical transmembrane segment spans residues 78–98 (FIFFVIVNAIASFYNLLVIGV). Residues 99–111 (EILGPQYDYKGLR) lie on the Cytoplasmic side of the membrane. Residues 112-132 (LGLIAILDVMTMALAATGDGA) traverse the membrane as a helical segment. Residues 133–164 (ATFMAELGRNGNSHARWDKICDKFEAYCNRGG) are Extracellular-facing. Residues 165–185 (VALVASFVGLILLLVVTVMSI) form a helical membrane-spanning segment. The Cytoplasmic segment spans residues 186–194 (TKLLKLNRI).

The protein belongs to the Casparian strip membrane proteins (CASP) family. As to quaternary structure, homodimer and heterodimers.

Its subcellular location is the cell membrane. The polypeptide is CASP-like protein 1B1 (Glycine max (Soybean)).